The following is a 240-amino-acid chain: DNA repair protein RecO (240 aa).

It belongs to the RecO family.

Functionally, involved in DNA repair and RecF pathway recombination. The polypeptide is DNA repair protein RecO (Actinobacillus pleuropneumoniae serotype 3 (strain JL03)).